Reading from the N-terminus, the 196-residue chain is MENSVNNCVRQRVFSNHQIRMIHEEEDHEESSWIVYFEDIDHDDEMVETEGEMTHYYDNDSSMISDAASPVHTTKINNVVRRKANNINTNPKKRRIIHQHKEEEEEELQKGEEEEEDEEDTASSPSNKTKIFSVLDHANDNTRYGKTMDNVTSEEIGCITETGSKIKEIMNEEFSAELKKRGLCVVPLSMLSNFIA.

The tract at residues 84–130 (ANNINTNPKKRRIIHQHKEEEEEELQKGEEEEEDEEDTASSPSNKTK) is disordered. The segment covering 103-121 (EEEEELQKGEEEEEDEEDT) has biased composition (acidic residues).

Involved in the regulation of plant growth. The sequence is that of Vascular-related unknown protein 2 from Arabidopsis thaliana (Mouse-ear cress).